The primary structure comprises 338 residues: Methionine import ATP-binding protein MetN 1 (338 aa).

The region spanning 2–241 (IELHQVSKSF…AKHATTKRFV (240 aa)) is the ABC transporter domain. Residue 38–45 (GYSGAGKS) coordinates ATP.

This sequence belongs to the ABC transporter superfamily. Methionine importer (TC 3.A.1.24) family. In terms of assembly, the complex is composed of two ATP-binding proteins (MetN), two transmembrane proteins (MetI) and a solute-binding protein (MetQ).

It localises to the cell membrane. It catalyses the reaction L-methionine(out) + ATP + H2O = L-methionine(in) + ADP + phosphate + H(+). It carries out the reaction D-methionine(out) + ATP + H2O = D-methionine(in) + ADP + phosphate + H(+). Functionally, part of the ABC transporter complex MetNIQ involved in methionine import. Responsible for energy coupling to the transport system. The polypeptide is Methionine import ATP-binding protein MetN 1 (Listeria monocytogenes serotype 4b (strain F2365)).